The sequence spans 240 residues: Phosphoribosylaminoimidazole-succinocarboxamide synthase (240 aa).

This sequence belongs to the SAICAR synthetase family.

It carries out the reaction 5-amino-1-(5-phospho-D-ribosyl)imidazole-4-carboxylate + L-aspartate + ATP = (2S)-2-[5-amino-1-(5-phospho-beta-D-ribosyl)imidazole-4-carboxamido]succinate + ADP + phosphate + 2 H(+). It participates in purine metabolism; IMP biosynthesis via de novo pathway; 5-amino-1-(5-phospho-D-ribosyl)imidazole-4-carboxamide from 5-amino-1-(5-phospho-D-ribosyl)imidazole-4-carboxylate: step 1/2. The sequence is that of Phosphoribosylaminoimidazole-succinocarboxamide synthase from Wolbachia pipientis wMel.